Here is a 445-residue protein sequence, read N- to C-terminus: Probable D-serine dehydratase (445 aa).

The residue at position 111 (Lys111) is an N6-(pyridoxal phosphate)lysine.

This sequence belongs to the serine/threonine dehydratase family. DsdA subfamily. Requires pyridoxal 5'-phosphate as cofactor.

The catalysed reaction is D-serine = pyruvate + NH4(+). The protein is Probable D-serine dehydratase of Burkholderia pseudomallei (strain K96243).